Reading from the N-terminus, the 1056-residue chain is Kinesin-like protein KIN-5A (1056 aa).

Positions 1–44 are disordered; sequence MDRRIGLTSPSPKSTEKSGRDLRSGGDANGGANTNSNSIPRGDK. Residues 14 to 24 are compositionally biased toward basic and acidic residues; that stretch reads STEKSGRDLRS. A Kinesin motor domain is found at 49–395; sequence NVQVILRCRP…LDYAHRAKNI (347 aa). Residue 135-142 participates in ATP binding; sequence GQTGTGKT. A coiled-coil region spans residues 443-525; sequence QEEAEKKAMT…STIKEKEYVI (83 aa).

The protein belongs to the TRAFAC class myosin-kinesin ATPase superfamily. Kinesin family. KIN-5/BimC subfamily.

The protein resides in the cytoplasm. It localises to the cytoskeleton. The protein localises to the spindle. Its function is as follows. Responsible for microtubule translocation. May be important for the organization of phragmoplast-specific arrays of microtubules. Plays an essential role in stabilizing the mitotic spindle. Required during mitotic cytokinesis. The polypeptide is Kinesin-like protein KIN-5A (Oryza sativa subsp. japonica (Rice)).